The primary structure comprises 69 residues: Large ribosomal subunit protein bL28 (69 aa).

Belongs to the bacterial ribosomal protein bL28 family.

The chain is Large ribosomal subunit protein bL28 from Lawsonia intracellularis (strain PHE/MN1-00).